The primary structure comprises 174 residues: Ribosome maturation factor RimM (174 aa).

The PRC barrel domain maps to 97–173 (GNKFYFHEVI…DLPVGLVEMY (77 aa)).

Belongs to the RimM family. In terms of assembly, binds ribosomal protein uS19.

Its subcellular location is the cytoplasm. Its function is as follows. An accessory protein needed during the final step in the assembly of 30S ribosomal subunit, possibly for assembly of the head region. Essential for efficient processing of 16S rRNA. May be needed both before and after RbfA during the maturation of 16S rRNA. It has affinity for free ribosomal 30S subunits but not for 70S ribosomes. The polypeptide is Ribosome maturation factor RimM (Flavobacterium johnsoniae (strain ATCC 17061 / DSM 2064 / JCM 8514 / BCRC 14874 / CCUG 350202 / NBRC 14942 / NCIMB 11054 / UW101) (Cytophaga johnsonae)).